A 694-amino-acid chain; its full sequence is Elongation factor G (694 aa).

The tr-type G domain occupies 9–288 (DAIRNIGIMA…VIVKWLPSPL (280 aa)). GTP is bound by residues 18–25 (AHIDAGKT), 82–86 (DTPGH), and 136–139 (NKMD).

Belongs to the TRAFAC class translation factor GTPase superfamily. Classic translation factor GTPase family. EF-G/EF-2 subfamily.

It localises to the cytoplasm. Catalyzes the GTP-dependent ribosomal translocation step during translation elongation. During this step, the ribosome changes from the pre-translocational (PRE) to the post-translocational (POST) state as the newly formed A-site-bound peptidyl-tRNA and P-site-bound deacylated tRNA move to the P and E sites, respectively. Catalyzes the coordinated movement of the two tRNA molecules, the mRNA and conformational changes in the ribosome. This chain is Elongation factor G, found in Chlamydia trachomatis serovar L2b (strain UCH-1/proctitis).